A 220-amino-acid chain; its full sequence is Iron-sulfur cluster repair protein YtfE (220 aa).

It belongs to the RIC family. YtfE subfamily. In terms of assembly, homodimer.

It is found in the cytoplasm. Di-iron-containing protein involved in the repair of iron-sulfur clusters damaged by oxidative and nitrosative stress conditions. This is Iron-sulfur cluster repair protein YtfE from Shigella boydii serotype 4 (strain Sb227).